A 469-amino-acid chain; its full sequence is Uronate isomerase (469 aa).

The protein belongs to the metallo-dependent hydrolases superfamily. Uronate isomerase family.

The catalysed reaction is D-glucuronate = D-fructuronate. It catalyses the reaction aldehydo-D-galacturonate = keto-D-tagaturonate. The protein operates within carbohydrate metabolism; pentose and glucuronate interconversion. This chain is Uronate isomerase, found in Pectobacterium atrosepticum (strain SCRI 1043 / ATCC BAA-672) (Erwinia carotovora subsp. atroseptica).